Here is a 109-residue protein sequence, read N- to C-terminus: uncharacterized protein (109 aa).

Residues 63–109 (DPSTWEPEEHETEHCRGHTLPEKKQKPQGGHGSDKDEDKGNCGCDHC) form a disordered region. Basic and acidic residues-rich tracts occupy residues 73 to 87 (ETEH…EKKQ) and 94 to 109 (GSDK…CDHC).

This is an uncharacterized protein from Caenorhabditis elegans.